Here is a 317-residue protein sequence, read N- to C-terminus: Electron transfer flavoprotein subunit alpha (317 aa).

This sequence belongs to the ETF alpha-subunit/FixB family. In terms of assembly, heterodimer of an alpha and a beta subunit. FAD serves as cofactor.

It is found in the cytoplasm. It participates in lipid metabolism; butanoate metabolism. Part of an electron transfer flavoprotein involved in syntrophic growth of S.wolfei with butyrate. Probably receives electrons from butyryl-CoA dehydrogenases, and transfers them to the membrane-bound quinone oxidoreductase Swol_0698. In Syntrophomonas wolfei subsp. wolfei (strain DSM 2245B / Goettingen), this protein is Electron transfer flavoprotein subunit alpha.